The primary structure comprises 563 residues: Putative GMC-type oxidoreductase L128 (563 aa).

A signal peptide spans 1 to 21 (MTSSIVLKFFLIATLLVIANS). Residue 48-77 (DYVIVGGGAAGSVLLDKCISYGYKCTLIER) participates in FAD binding. The Proton acceptor role is filled by H504.

It belongs to the GMC oxidoreductase family. The cofactor is FAD.

In Acanthamoeba polyphaga mimivirus (APMV), this protein is Putative GMC-type oxidoreductase L128.